A 63-amino-acid chain; its full sequence is MLILTRKVGESVLIGDDISITVLSVRGNQVKLGVEAPKEVSVHREEIYQRIKQTKDEPYLASS.

Belongs to the CsrA/RsmA family. In terms of assembly, homodimer; the beta-strands of each monomer intercalate to form a hydrophobic core, while the alpha-helices form wings that extend away from the core.

The protein resides in the cytoplasm. Its function is as follows. A key translational regulator that binds mRNA to regulate translation initiation and/or mRNA stability. Mediates global changes in gene expression, shifting from rapid growth to stress survival by linking envelope stress, the stringent response and the catabolite repression systems. Usually binds in the 5'-UTR; binding at or near the Shine-Dalgarno sequence prevents ribosome-binding, repressing translation, binding elsewhere in the 5'-UTR can activate translation and/or stabilize the mRNA. Its function is antagonized by small RNA(s). The polypeptide is Translational regulator CsrA (Haemophilus influenzae (strain PittEE)).